Consider the following 325-residue polypeptide: Tetraacyldisaccharide 4'-kinase (325 aa).

54–61 (SVGGTGKT) is an ATP binding site.

It belongs to the LpxK family.

It carries out the reaction a lipid A disaccharide + ATP = a lipid IVA + ADP + H(+). The protein operates within glycolipid biosynthesis; lipid IV(A) biosynthesis; lipid IV(A) from (3R)-3-hydroxytetradecanoyl-[acyl-carrier-protein] and UDP-N-acetyl-alpha-D-glucosamine: step 6/6. Functionally, transfers the gamma-phosphate of ATP to the 4'-position of a tetraacyldisaccharide 1-phosphate intermediate (termed DS-1-P) to form tetraacyldisaccharide 1,4'-bis-phosphate (lipid IVA). The protein is Tetraacyldisaccharide 4'-kinase of Rickettsia akari (strain Hartford).